A 1026-amino-acid chain; its full sequence is MSNTMPEGYIPRPGKDQTLEAYISEELSKHNLTFNDVLNNEEMMAELSKDDAFMKLKAEFENKDKPEVVEASSNKKEEKVSEPKVEEKKDPEPEKDAPALVVEEVVMDDDDADEVEKPTMEAPKSTVAKLTETQFRIDSSNLMSKIDFTIAYDKLMTVDSFGVEDLVTKSPFYATRLDKPRHMRMDEFCNEFIEPAIPSALGHPNSEGYTDMVGFDWEKNQYLNLYEELGRRSVEAIELDDDANAGDVIIGGVTSLSMIKQVNAIVHDAILPKGRLAYIMAQMRAARCLQFTRVANGQEATPEDKLQAYMDAYMNPTYTRALRIRTPEPRVVTYNKAIDYVMYRLTLNADNDFISPMVQISDSIDVGRGVRSRSYQAATTVMSVIASSHRNLERPMTSARAPAKVITAFTDLVAPPAAEAMQKLGSYCLGGRRAELTVDMTDPILQSTDSVLAPIAAAANLILLDTNRLGNDIKRTLVYRMLSPFYGTGTRAEVDRINFNNIPRIVLTPIPDRRGLHGRLANFIRRQLTKPAYGRMDRNDSRIWRADIQTTPMLPFVPAGGMTPLSMHIGDERLENQAYAPQANELKVSLMDFVKMFDLMHARQGKETYLSSQFSAILTNESSYLYNSISMVMRTMIRGWESLDLLPPLDGAVPGALEMDRTEAFVLPFTGAVSFICYGIEDDGLEYVPWEQRKEIPMPSSFPMLLDMEIRVANELLLEAADPAGRFTRSDMLINQDEFINMAEFIMKKYLTSIDGGEFGTRYRLHWYLFEGIRIHNRTLQTPGIEDLKVARRILDGVKYPEDIATAVYIKIYESVNPIDLVNPDPQRSDYQVYMEEIPADDEILEIKDIVTYRREDGGEDFNFTPYLHSGETFNLDLIRKLAKSIPGDHRYVKVPTKVTVKPVELLDNVDVIAEDFTVALKFKKGVNEMRFEASDIPLYYRWDKFNGRSQLTLDVRVFPDTNVLLDHVMESDPRMGYAPQVLNDGTVGWVSTLSGNVYLEERKVCRREEEVLKSGIDLLIDPYGV.

The segment at 60–96 (FENKDKPEVVEASSNKKEEKVSEPKVEEKKDPEPEKD) is disordered.

It localises to the virion. Functionally, self-assembles to form an icosahedral capsid with a pseudo T=2 symmetry, about 60 nm in diameter, and consisting of 120 VP3 subunits. The capsid encapsulates the genomic RNA. The chain is Major inner capsid protein VP3 (S3) from Micromonas pusilla (Picoplanktonic green alga).